An 843-amino-acid chain; its full sequence is MTETKSGKAVAPAAQDSVAGTLAVCRSSGEEFRVPKTHDMLRSLFDPRLRKSFLELCITLSLVANCAFCYWSWRVMGGEWAMRMYLAQYLAWRLTYNLGIGLILHYQSHYEFLTEFAKRNGLFASGAASKSWLASFCQFEIASKMPREYDMAQYPTEFNVWLLFRQFVDLVLMQDFTTYVLYVLLSFSKSQVTWSLLQHLNWTSCRVYVGTLMLLLNVWVKMDAHRVVKDYAWYWGDFFFLLKDSNLIFDGVFNISPHPMYSIGYMGYYGVSLITGDYRVLLVSILGHFLQFLFLKYVETPHIERIYGPDQPSSIERVDDQIIKNNRNYTRPLMMTYFWFKNFDPLRPTDYFTVGTAAASISAILLNPKKETVFAITLFVKLVTSMVNFFILRRQSTDKWFTKLFLRNGYTQLYSYQMWQFIYNFNLMLSYVTLALQTWIQFQALSQHDYTNVIFGFILVALHIWADGEILNALTEFGWFYGDFFLTNYIQRPKLASHGIYRYLKNPECVLGVAGAWGTVLITDFSVENIILATIWTLSNHIMVTFVESPHVAKVYGNEMLARQSGVGKTLLGFTPIKHFSDWLDKFSGSLIDMLNVSTEGRDQLEDVIAAALQATTRKLSPDSEFEINRDSENNSDGDFSFTIGDSIEISWKLPRELYHDEDWIGLYRVLETGEDRYRTLVSSRDHWCATNTMGYPKSVKAIGAVKEFTKGDTCVQGRVVFDHNLLYFEKGVYEFRYHSTSGHKVLMISPPFKITVPQLDLDTPEALYQSTVKLLEKCHCLNENGRFEHSKNKYLSERTLQKLFRNSTGADISSDYMKRVNYEIREITERIYEMKKILDSLR.

The Lumenal segment spans residues 1–52 (MTETKSGKAVAPAAQDSVAGTLAVCRSSGEEFRVPKTHDMLRSLFDPRLRKS). A helical membrane pass occupies residues 53-73 (FLELCITLSLVANCAFCYWSW). The Cytoplasmic segment spans residues 74-83 (RVMGGEWAMR). A helical membrane pass occupies residues 84–104 (MYLAQYLAWRLTYNLGIGLIL). At 105 to 166 (HYQSHYEFLT…EFNVWLLFRQ (62 aa)) the chain is on the lumenal side. The chain crosses the membrane as a helical span at residues 167–187 (FVDLVLMQDFTTYVLYVLLSF). The Cytoplasmic portion of the chain corresponds to 188-197 (SKSQVTWSLL). Residues 198–220 (QHLNWTSCRVYVGTLMLLLNVWV) form a helical membrane-spanning segment. Topologically, residues 221 to 246 (KMDAHRVVKDYAWYWGDFFFLLKDSN) are lumenal. A helical membrane pass occupies residues 247–267 (LIFDGVFNISPHPMYSIGYMG). Topologically, residues 268-279 (YYGVSLITGDYR) are cytoplasmic. Residues 280 to 300 (VLLVSILGHFLQFLFLKYVET) traverse the membrane as a helical segment. The Lumenal segment spans residues 301–348 (PHIERIYGPDQPSSIERVDDQIIKNNRNYTRPLMMTYFWFKNFDPLRP). A helical transmembrane segment spans residues 349 to 366 (TDYFTVGTAAASISAILL). Topologically, residues 367-371 (NPKKE) are cytoplasmic. A helical transmembrane segment spans residues 372 to 392 (TVFAITLFVKLVTSMVNFFIL). Topologically, residues 393–419 (RRQSTDKWFTKLFLRNGYTQLYSYQMW) are lumenal. The chain crosses the membrane as a helical span at residues 420 to 440 (QFIYNFNLMLSYVTLALQTWI). Residues 441-452 (QFQALSQHDYTN) lie on the Cytoplasmic side of the membrane. The chain crosses the membrane as a helical span at residues 453 to 473 (VIFGFILVALHIWADGEILNA). Residues 474–512 (LTEFGWFYGDFFLTNYIQRPKLASHGIYRYLKNPECVLG) lie on the Lumenal side of the membrane. Residues 513-533 (VAGAWGTVLITDFSVENIILA) form a helical membrane-spanning segment. The Cytoplasmic segment spans residues 534-843 (TIWTLSNHIM…EMKKILDSLR (310 aa)).

It belongs to the class VI-like SAM-binding methyltransferase superfamily. CHO2 family.

The protein resides in the endoplasmic reticulum membrane. It catalyses the reaction a 1,2-diacyl-sn-glycero-3-phosphoethanolamine + S-adenosyl-L-methionine = a 1,2-diacyl-sn-glycero-3-phospho-N-methylethanolamine + S-adenosyl-L-homocysteine + H(+). It participates in phospholipid metabolism; phosphatidylcholine biosynthesis. Catalyzes the first step of the methylation pathway of phosphatidylcholine biosynthesis, the SAM-dependent methylation of phosphatidylethanolamine (PE) to phosphatidylmonomethylethanolamine (PMME). In Eremothecium gossypii (strain ATCC 10895 / CBS 109.51 / FGSC 9923 / NRRL Y-1056) (Yeast), this protein is Phosphatidylethanolamine N-methyltransferase (CHO2).